We begin with the raw amino-acid sequence, 485 residues long: Glutamyl-tRNA(Gln) amidotransferase subunit A (485 aa).

Residues lysine 79 and serine 154 each act as charge relay system in the active site. The active-site Acyl-ester intermediate is the serine 178.

It belongs to the amidase family. GatA subfamily. As to quaternary structure, heterotrimer of A, B and C subunits.

The enzyme catalyses L-glutamyl-tRNA(Gln) + L-glutamine + ATP + H2O = L-glutaminyl-tRNA(Gln) + L-glutamate + ADP + phosphate + H(+). In terms of biological role, allows the formation of correctly charged Gln-tRNA(Gln) through the transamidation of misacylated Glu-tRNA(Gln) in organisms which lack glutaminyl-tRNA synthetase. The reaction takes place in the presence of glutamine and ATP through an activated gamma-phospho-Glu-tRNA(Gln). In Carboxydothermus hydrogenoformans (strain ATCC BAA-161 / DSM 6008 / Z-2901), this protein is Glutamyl-tRNA(Gln) amidotransferase subunit A.